Here is a 149-residue protein sequence, read N- to C-terminus: SsrA-binding protein (149 aa).

This sequence belongs to the SmpB family.

It is found in the cytoplasm. In terms of biological role, required for rescue of stalled ribosomes mediated by trans-translation. Binds to transfer-messenger RNA (tmRNA), required for stable association of tmRNA with ribosomes. tmRNA and SmpB together mimic tRNA shape, replacing the anticodon stem-loop with SmpB. tmRNA is encoded by the ssrA gene; the 2 termini fold to resemble tRNA(Ala) and it encodes a 'tag peptide', a short internal open reading frame. During trans-translation Ala-aminoacylated tmRNA acts like a tRNA, entering the A-site of stalled ribosomes, displacing the stalled mRNA. The ribosome then switches to translate the ORF on the tmRNA; the nascent peptide is terminated with the 'tag peptide' encoded by the tmRNA and targeted for degradation. The ribosome is freed to recommence translation, which seems to be the essential function of trans-translation. The sequence is that of SsrA-binding protein from Mesoplasma florum (strain ATCC 33453 / NBRC 100688 / NCTC 11704 / L1) (Acholeplasma florum).